The chain runs to 128 residues: Histone H2A type 1-H (128 aa).

The segment at 1-22 (MSGRGKQGGKARAKAKTRSSRA) is disordered. Ser2 is subject to N-acetylserine. Ser2 is modified (phosphoserine; by RPS6KA5). Arg4 is modified (citrulline; alternate). Arg4 carries the symmetric dimethylarginine; by PRMT5; alternate modification. Residue Lys6 is modified to N6-(2-hydroxyisobutyryl)lysine. The span at 7–19 (QGGKARAKAKTRS) shows a compositional bias: basic residues. At Lys10 the chain carries N6-(2-hydroxyisobutyryl)lysine; alternate. Lys10 and Lys14 each carry N6-(beta-hydroxybutyryl)lysine; alternate. N6-lactoyllysine; alternate is present on Lys10. Lys10 is subject to N6-succinyllysine; alternate. Residue Lys14 forms a Glycyl lysine isopeptide (Lys-Gly) (interchain with G-Cter in ubiquitin); alternate linkage. Residue Lys16 forms a Glycyl lysine isopeptide (Lys-Gly) (interchain with G-Cter in ubiquitin) linkage. The residue at position 37 (Lys37) is an N6-(2-hydroxyisobutyryl)lysine; alternate. Lys37 is subject to N6-(beta-hydroxybutyryl)lysine; alternate. N6-crotonyllysine; alternate is present on Lys37. 2 positions are modified to N6-(2-hydroxyisobutyryl)lysine: Lys75 and Lys76. Lys96 is modified (N6-(2-hydroxyisobutyryl)lysine; alternate). Lys96 is modified (N6-(beta-hydroxybutyryl)lysine; alternate). At Lys96 the chain carries N6-succinyllysine; alternate. Position 96 is an N6-glutaryllysine; alternate (Lys96). Lys100 is subject to N6-glutaryllysine. Gln105 carries the post-translational modification N5-methylglutamine. Lys119 carries the post-translational modification N6-(2-hydroxyisobutyryl)lysine; alternate. Lys119 carries the post-translational modification N6-(beta-hydroxybutyryl)lysine; alternate. Lys119 and Lys120 each carry N6-crotonyllysine; alternate. Lys119 and Lys120 each carry N6-glutaryllysine; alternate. Lys120 participates in a covalent cross-link: Glycyl lysine isopeptide (Lys-Gly) (interchain with G-Cter in ubiquitin); alternate. Thr121 is modified (phosphothreonine; by DCAF1). Lys126 is subject to N6-crotonyllysine; alternate. Lys126 bears the N6-glutaryllysine; alternate mark.

Belongs to the histone H2A family. The nucleosome is a histone octamer containing two molecules each of H2A, H2B, H3 and H4 assembled in one H3-H4 heterotetramer and two H2A-H2B heterodimers. The octamer wraps approximately 147 bp of DNA. In terms of processing, deiminated on Arg-4 in granulocytes upon calcium entry. Post-translationally, monoubiquitination of Lys-120 (H2AK119Ub) by RING1, TRIM37 and RNF2/RING2 complex gives a specific tag for epigenetic transcriptional repression and participates in X chromosome inactivation of female mammals. It is involved in the initiation of both imprinted and random X inactivation. Ubiquitinated H2A is enriched in inactive X chromosome chromatin. Ubiquitination of H2A functions downstream of methylation of 'Lys-27' of histone H3 (H3K27me). H2AK119Ub by RNF2/RING2 can also be induced by ultraviolet and may be involved in DNA repair. Monoubiquitination of Lys-120 (H2AK119Ub) by TRIM37 may promote transformation of cells in a number of breast cancers. Following DNA double-strand breaks (DSBs), it is ubiquitinated through 'Lys-63' linkage of ubiquitin moieties by the E2 ligase UBE2N and the E3 ligases RNF8 and RNF168, leading to the recruitment of repair proteins to sites of DNA damage. Ubiquitination at Lys-14 and Lys-16 (H2AK13Ub and H2AK15Ub, respectively) in response to DNA damage is initiated by RNF168 that mediates monoubiquitination at these 2 sites, and 'Lys-63'-linked ubiquitin are then conjugated to monoubiquitin; RNF8 is able to extend 'Lys-63'-linked ubiquitin chains in vitro. Deubiquitinated by USP51 at Lys-14 and Lys-16 (H2AK13Ub and H2AK15Ub, respectively) after damaged DNA is repaired. H2AK119Ub and ionizing radiation-induced 'Lys-63'-linked ubiquitination (H2AK13Ub and H2AK15Ub) are distinct events. Phosphorylation on Ser-2 (H2AS1ph) is enhanced during mitosis. Phosphorylation on Ser-2 by RPS6KA5/MSK1 directly represses transcription. Acetylation of H3 inhibits Ser-2 phosphorylation by RPS6KA5/MSK1. Phosphorylation at Thr-121 (H2AT120ph) by DCAF1 is present in the regulatory region of many tumor suppresor genes and down-regulates their transcription. In terms of processing, glutamine methylation at Gln-105 (H2AQ104me) by FBL is specifically dedicated to polymerase I. It is present at 35S ribosomal DNA locus and impairs binding of the FACT complex. Post-translationally, symmetric dimethylation on Arg-4 by the PRDM1/PRMT5 complex may play a crucial role in the germ-cell lineage. Crotonylation (Kcr) is specifically present in male germ cells and marks testis-specific genes in post-meiotic cells, including X-linked genes that escape sex chromosome inactivation in haploid cells. Crotonylation marks active promoters and enhancers and confers resistance to transcriptional repressors. It is also associated with post-meiotically activated genes on autosomes. In terms of processing, lactylated in macrophages by EP300/P300 by using lactoyl-CoA directly derived from endogenous or exogenous lactate, leading to stimulates gene transcription.

It is found in the nucleus. The protein resides in the chromosome. Its function is as follows. Core component of nucleosome. Nucleosomes wrap and compact DNA into chromatin, limiting DNA accessibility to the cellular machineries which require DNA as a template. Histones thereby play a central role in transcription regulation, DNA repair, DNA replication and chromosomal stability. DNA accessibility is regulated via a complex set of post-translational modifications of histones, also called histone code, and nucleosome remodeling. This chain is Histone H2A type 1-H, found in Homo sapiens (Human).